The chain runs to 783 residues: Protein involved in starch initiation 1 (783 aa).

The transit peptide at 1-27 directs the protein to the chloroplast; sequence MGFSQAIRLNLASFSSPSPCDYCLTRV. Coiled-coil stretches lie at residues 128-309, 345-432, and 457-512; these read LHDA…LKEE, LVFS…LELA, and LQEK…LKAL.

As to quaternary structure, interacts with PTST2; the interaction is essential for the initiation of starch granules biosynthesis in leaf chloroplasts. Interacts with SS4; the interaction is essential for the initiation of starch granules biosynthesis in leaf chloroplasts.

The protein localises to the plastid. Its subcellular location is the chloroplast. In terms of biological role, required for the initiation of starch granules biosynthesis in leaf chloroplasts. Involved in determining starch granule number and size in chloroplasts. The polypeptide is Protein involved in starch initiation 1 (Arabidopsis thaliana (Mouse-ear cress)).